The primary structure comprises 150 residues: Transcriptional regulator MraZ (150 aa).

SpoVT-AbrB domains are found at residues 6–52 (EFFN…PYQE) and 80–126 (AVEC…NRTK).

Belongs to the MraZ family. As to quaternary structure, forms oligomers.

The protein localises to the cytoplasm. Its subcellular location is the nucleoid. This is Transcriptional regulator MraZ from Syntrophotalea carbinolica (strain DSM 2380 / NBRC 103641 / GraBd1) (Pelobacter carbinolicus).